The chain runs to 429 residues: Enolase (429 aa).

Position 163 (Gln-163) interacts with (2R)-2-phosphoglycerate. Glu-205 serves as the catalytic Proton donor. Positions 242, 285, and 312 each coordinate Mg(2+). Positions 337, 366, 367, and 388 each coordinate (2R)-2-phosphoglycerate. The active-site Proton acceptor is the Lys-337.

It belongs to the enolase family. Mg(2+) serves as cofactor.

The protein localises to the cytoplasm. It localises to the secreted. Its subcellular location is the cell surface. The enzyme catalyses (2R)-2-phosphoglycerate = phosphoenolpyruvate + H2O. Its pathway is carbohydrate degradation; glycolysis; pyruvate from D-glyceraldehyde 3-phosphate: step 4/5. Catalyzes the reversible conversion of 2-phosphoglycerate (2-PG) into phosphoenolpyruvate (PEP). It is essential for the degradation of carbohydrates via glycolysis. This Oceanobacillus iheyensis (strain DSM 14371 / CIP 107618 / JCM 11309 / KCTC 3954 / HTE831) protein is Enolase.